Reading from the N-terminus, the 175-residue chain is Ribulose bisphosphate carboxylase small subunit, chloroplastic (175 aa).

The transit peptide at 1-46 (MAPSVMASSATTVAPFQGLKSTAGMPVARRSGNSSFGNVSNGGRIR) directs the protein to the chloroplast. The segment at 60-64 (ETLSY) is interaction with large subunit.

It belongs to the RuBisCO small chain family. In terms of assembly, heterohexadecamer of 8 large and 8 small subunits.

The protein resides in the plastid. It is found in the chloroplast. RuBisCO catalyzes two reactions: the carboxylation of D-ribulose 1,5-bisphosphate, the primary event in carbon dioxide fixation, as well as the oxidative fragmentation of the pentose substrate. Both reactions occur simultaneously and in competition at the same active site. Although the small subunit is not catalytic it is essential for maximal activity. This Oryza sativa subsp. indica (Rice) protein is Ribulose bisphosphate carboxylase small subunit, chloroplastic.